The primary structure comprises 75 residues: Metallothionein-like protein 1B (75 aa).

Belongs to the metallothionein superfamily. Type 15 family.

Functionally, metallothioneins have a high content of cysteine residues that bind various heavy metals. This Vicia faba (Broad bean) protein is Metallothionein-like protein 1B (MT1B).